The sequence spans 364 residues: Leucine-rich repeat-containing protein 19 (364 aa).

The signal sequence occupies residues Met-1–Ser-20. Topologically, residues Gln-21–Trp-264 are extracellular. N-linked (GlcNAc...) asparagine glycans are attached at residues Asn-30, Asn-35, Asn-46, and Asn-88. 6 LRR repeats span residues Ser-44–Met-69, Tyr-70–Asn-93, Leu-94–Gly-117, Leu-118–Pro-141, Asn-143–Leu-163, and Pro-164–Asn-190. The LRRCT domain maps to Asn-174–His-225. 7 N-linked (GlcNAc...) asparagine glycosylation sites follow: Asn-177, Asn-190, Asn-193, Asn-200, Asn-241, Asn-245, and Asn-250. The chain crosses the membrane as a helical span at residues Ala-265–Ile-285. Residues Lys-286 to Lys-364 are Cytoplasmic-facing.

In terms of assembly, interacts with TRAF2 and TRAF6. As to expression, strongly expressed in kidney, also expressed in spleen, intestine and colon. Highly expressed in epithelial cells. In kidney, mainly expressed in renal collecting duct epithelial cells.

It localises to the membrane. With respect to regulation, activated by TLR ligands such as LPS, bacterial DNA and peptidoglycan. Pathogen-recognition receptor which mediates the activation of TRAF2- and TRAF6 NF-kappa-B signaling pathways and induces the expression of pro-inflammatory cytokines. In kidney, prevents infection by uropathogenic bacteria by inducing the production of cytokines, chemokines and antimicrobial substances. In gut, involved in host-microbiota interactions, plays a critical role in promoting the recruitment of immune cells and intestinal inflammation. The protein is Leucine-rich repeat-containing protein 19 of Mus musculus (Mouse).